The chain runs to 310 residues: Homoserine O-acetyltransferase (310 aa).

The active-site Acyl-thioester intermediate is Cys-142. Substrate contacts are provided by Lys-163 and Ser-192. The active-site Proton acceptor is the His-235. Residue Glu-237 is part of the active site. A substrate-binding site is contributed by Arg-249.

It belongs to the MetA family.

Its subcellular location is the cytoplasm. It catalyses the reaction L-homoserine + acetyl-CoA = O-acetyl-L-homoserine + CoA. It functions in the pathway amino-acid biosynthesis; L-methionine biosynthesis via de novo pathway; O-acetyl-L-homoserine from L-homoserine: step 1/1. Functionally, transfers an acetyl group from acetyl-CoA to L-homoserine, forming acetyl-L-homoserine. The protein is Homoserine O-acetyltransferase of Parabacteroides distasonis (strain ATCC 8503 / DSM 20701 / CIP 104284 / JCM 5825 / NCTC 11152).